The following is a 601-amino-acid chain: DDB1- and CUL4-associated factor 8 (601 aa).

2 stretches are compositionally biased toward polar residues: residues 1–24 (MSFS…SSPE) and 46–60 (VSLS…TTQA). A disordered region spans residues 1–150 (MSFSGEMSNG…DWLISEKTPL (150 aa)). A Nuclear export signal motif is present at residues 39–50 (IEVEASDVSLSL). Residues 61 to 99 (ESRDSCSETSGEDKDSDSMDDTGHYSINDENRGNDQSHS) show a composition bias toward basic and acidic residues. Residues 94–131 (NDQSHSEDEEEEEEEDEEEEAVRHRKRAQRKRANRDQE) adopt a coiled-coil conformation. The span at 100-113 (EDEEEEEEEDEEEE) shows a compositional bias: acidic residues. Positions 116-126 (RHRKRAQRKRA) are enriched in basic residues. Over residues 127-140 (NRDQESSDEERALD) the composition is skewed to basic and acidic residues. WD repeat units lie at residues 194–233 (GHSG…PVLE), 237–278 (GHKS…CCKN), 284–324 (QHKG…PASR), 332–372 (ESKV…ENVN), 388–427 (EAKA…GAEY), 435–475 (RNNA…IVQF), and 479–519 (DKGG…TELD). Residues 561 to 601 (RRRRRDAGLGAGDAESDDSPSSSDSSDDDEDGPDRVQCIPS) are disordered.

This sequence belongs to the WD repeat DCAF8 family.

Its subcellular location is the nucleus. It localises to the cytoplasm. In Xenopus laevis (African clawed frog), this protein is DDB1- and CUL4-associated factor 8 (dcaf8).